We begin with the raw amino-acid sequence, 162 residues long: Large ribosomal subunit protein bL17 (162 aa).

Over residues 125–140 the composition is skewed to basic and acidic residues; it reads AAKEAPAKEVAEEKAA. Positions 125–162 are disordered; it reads AAKEAPAKEVAEEKAAKPAKKAAPKKAEKEEAEDAAEA.

This sequence belongs to the bacterial ribosomal protein bL17 family. In terms of assembly, part of the 50S ribosomal subunit. Contacts protein L32.

This chain is Large ribosomal subunit protein bL17, found in Oleidesulfovibrio alaskensis (strain ATCC BAA-1058 / DSM 17464 / G20) (Desulfovibrio alaskensis).